A 1390-amino-acid polypeptide reads, in one-letter code: DNA-directed RNA polymerase III subunit RPC1 (1390 aa).

Residues cysteine 69, cysteine 72, cysteine 79, histidine 82, cysteine 109, and cysteine 112 each contribute to the Zn(2+) site. Residue lysine 144 participates in DNA binding. Zn(2+) contacts are provided by cysteine 156 and cysteine 159. 6 residues coordinate DNA: lysine 167, serine 326, lysine 348, arginine 353, arginine 360, and arginine 366. Lysine 445 is modified (N6-acetyllysine). An RNA-binding site is contributed by arginine 464. Positions 499, 501, and 503 each coordinate Mg(2+). RNA is bound at residue aspartate 503. A bridging helix region spans residues 843 to 884; it reads TPTEFFFHTMAGREGLVDTAVKTAETGYMQRRLVKSLEDLCS. Positions 1029–1070 are trigger loop; sequence PGSAVGALCAQSIGEPGTQMTLKTFHFAGVASMNITLGVPRI. Residues arginine 1159, arginine 1305, and lysine 1323 each contribute to the DNA site.

It belongs to the RNA polymerase beta' chain family. In terms of assembly, component of the RNA polymerase III (Pol III) (Pol III) complex consisting of 17 subunits: a ten-subunit catalytic core composed of POLR3A/RPC1, POLR3B/RPC2, POLR1C/RPAC1, POLR1D/RPAC2, POLR3K/RPC10, POLR2E/RPABC1, POLR2F/RPABC2, POLR2H/RPABC3, POLR2K/RPABC4 and POLR2L/RPABC5; a mobile stalk composed of two subunits POLR3H/RPC8 and CRCP/RPC9, protruding from the core and functioning primarily in transcription initiation; and additional subunits homologous to general transcription factors of the RNA polymerase II machinery, POLR3C/RPC3-POLR3F/RPC6-POLR3G/RPC7 heterotrimer required for transcription initiation and POLR3D/RPC4-POLR3E/RPC5 heterodimer involved in both transcription initiation and termination. Pol III exists as two alternative complexes defined by the mutually exclusive incorporation of subunit POLR3G/RPC7alpha or POLR3GL/RPC7beta. The presence of POLR3G/RPC7alpha or POLR3GL/RPC7beta differentially modulates the transcription potential of Pol III, with POLR3G/RPC7alpha specifically associated with transcription of snaR-A non-coding RNAs. As part of the RNA polymerase III complex, interacts with PKP2. Requires Mg(2+) as cofactor. Expressed in the brain, in the cortex and the white matter (at protein level).

It is found in the nucleus. The protein resides in the cytoplasm. Its subcellular location is the cytosol. The catalysed reaction is RNA(n) + a ribonucleoside 5'-triphosphate = RNA(n+1) + diphosphate. Its function is as follows. Catalytic core component of RNA polymerase III (Pol III), a DNA-dependent RNA polymerase which synthesizes small non-coding RNAs using the four ribonucleoside triphosphates as substrates. Synthesizes 5S rRNA, snRNAs, tRNAs and miRNAs from at least 500 distinct genomic loci. Pol III-mediated transcription cycle proceeds through transcription initiation, transcription elongation and transcription termination stages. During transcription initiation, Pol III is recruited to DNA promoters type I, II or III with the help of general transcription factors and other specific initiation factors. Once the polymerase has escaped from the promoter it enters the elongation phase during which RNA is actively polymerized, based on complementarity with the template DNA strand. Transcription termination involves the release of the RNA transcript and polymerase from the DNA. Forms Pol III active center together with the second largest subunit POLR3B/RPC2. Appends one nucleotide at a time to the 3' end of the nascent RNA, with POLR3A/RPC1 contributing a Mg(2+)-coordinating DxDGD motif, and POLR3B/RPC2 participating in the coordination of a second Mg(2+) ion and providing lysine residues believed to facilitate Watson-Crick base pairing between the incoming nucleotide and template base. Typically, Mg(2+) ions direct a 5' nucleoside triphosphate to form a phosphodiester bond with the 3' hydroxyl of the preceding nucleotide of the nascent RNA, with the elimination of pyrophosphate. Pol III plays a key role in sensing and limiting infection by intracellular bacteria and DNA viruses. Acts as a nuclear and cytosolic DNA sensor involved in innate immune response. Can sense non-self dsDNA that serves as template for transcription into dsRNA. The non-self RNA polymerase III transcripts, such as Epstein-Barr virus-encoded RNAs (EBERs) induce type I interferon and NF-kappa-B through the RIG-I pathway. The polypeptide is DNA-directed RNA polymerase III subunit RPC1 (Homo sapiens (Human)).